Reading from the N-terminus, the 804-residue chain is Leucine--tRNA ligase (804 aa).

The 'HIGH' region signature appears at 40–51; it reads PYPSGAGLHVGH. The 'KMSKS' region signature appears at 576–580; sequence KMSKS. Lysine 579 is an ATP binding site.

It belongs to the class-I aminoacyl-tRNA synthetase family.

The protein localises to the cytoplasm. It catalyses the reaction tRNA(Leu) + L-leucine + ATP = L-leucyl-tRNA(Leu) + AMP + diphosphate. The sequence is that of Leucine--tRNA ligase from Bacillus pumilus (strain SAFR-032).